Reading from the N-terminus, the 1360-residue chain is DNA-directed RNA polymerase subunit beta (1360 aa).

This sequence belongs to the RNA polymerase beta chain family. In terms of assembly, the RNAP catalytic core consists of 2 alpha, 1 beta, 1 beta' and 1 omega subunit. When a sigma factor is associated with the core the holoenzyme is formed, which can initiate transcription.

It carries out the reaction RNA(n) + a ribonucleoside 5'-triphosphate = RNA(n+1) + diphosphate. DNA-dependent RNA polymerase catalyzes the transcription of DNA into RNA using the four ribonucleoside triphosphates as substrates. This is DNA-directed RNA polymerase subunit beta from Caulobacter sp. (strain K31).